The primary structure comprises 123 residues: Ribosome-binding factor A (123 aa).

It belongs to the RbfA family. Monomer. Binds 30S ribosomal subunits, but not 50S ribosomal subunits or 70S ribosomes.

Its subcellular location is the cytoplasm. Functionally, one of several proteins that assist in the late maturation steps of the functional core of the 30S ribosomal subunit. Associates with free 30S ribosomal subunits (but not with 30S subunits that are part of 70S ribosomes or polysomes). Required for efficient processing of 16S rRNA. May interact with the 5'-terminal helix region of 16S rRNA. The sequence is that of Ribosome-binding factor A from Lactobacillus johnsonii (strain CNCM I-12250 / La1 / NCC 533).